Reading from the N-terminus, the 805-residue chain is Angiotensin-converting enzyme 2 (805 aa).

A signal peptide spans 1-17; that stretch reads MSGSFWLLLSFAALTAA. Residues 18–740 lie on the Extracellular side of the membrane; that stretch reads QSTTEELAKT…LSPPYRPPVT (723 aa). A Peptidase M2 domain is found at 19–607; it reads STTEELAKTF…QNRNSFVGWD (589 aa). The interaction with SARS S protein stretch occupies residues 30–41; the sequence is ETFNYEAQELSY. N-linked (GlcNAc...) asparagine glycosylation occurs at asparagine 53. Interaction with SARS S protein stretches follow at residues 82–84 and 90–93; these read TYP and DAKI. Cysteine 133 and cysteine 141 are oxidised to a cystine. A chloride-binding site is contributed by arginine 169. N-linked (GlcNAc...) asparagine glycosylation occurs at asparagine 216. Arginine 273 provides a ligand contact to substrate. Asparagine 322 carries N-linked (GlcNAc...) asparagine glycosylation. A disulfide bond links cysteine 344 and cysteine 361. Position 345–346 (345–346) interacts with substrate; it reads HP. The interaction with SARS S protein stretch occupies residues 353-357; it reads KGDFR. Histidine 374 serves as a coordination point for Zn(2+). Catalysis depends on glutamate 375, which acts as the Proton acceptor. Residues histidine 378 and glutamate 402 each contribute to the Zn(2+) site. Tryptophan 477 and lysine 481 together coordinate chloride. The active-site Proton donor is histidine 505. Tyrosine 515 lines the substrate pocket. A disulfide bond links cysteine 530 and cysteine 542. Asparagine 546 carries an N-linked (GlcNAc...) asparagine glycan. Positions 614 to 805 constitute a Collectrin-like domain; the sequence is SDQSIKVRIS…QHADDVQTSF (192 aa). Residues 652-659 are essential for cleavage by ADAM17; the sequence is REYFSKVK. N-linked (GlcNAc...) asparagine glycans are attached at residues asparagine 660 and asparagine 690. An essential for cleavage by TMPRSS11D and TMPRSS2 region spans residues 697–716; the sequence is RSEVEDAIRMSRSRINDAFR. Residues 741–761 form a helical membrane-spanning segment; it reads IWLIVFGVVMGAIVVGIVLLI. Over 762–805 the chain is Cytoplasmic; the sequence is VSGIRNRRKNDQAGSEENPYASVDLNKGENNPGFQHADDVQTSF. Residues 771-805 are disordered; the sequence is NDQAGSEENPYASVDLNKGENNPGFQHADDVQTSF. Positions 778-786 match the LIR motif; it reads ENPYASVDL. Tyrosine 781 carries the phosphotyrosine modification. Positions 781–784 match the Endocytic sorting signal motif; it reads YASV. Positions 781–785 match the SH2-binding motif; sequence YASVD. Serine 783 is subject to Phosphoserine. The PTB signature appears at 792-795; the sequence is NPGF. Residues 803–805 carry the PDZ-binding motif; it reads TSF.

This sequence belongs to the peptidase M2 family. As to quaternary structure, homodimer. Interacts with the catalytically active form of TMPRSS2. Interacts with SLC6A19; this interaction is essential for expression and function of SLC6A19 in intestine. Interacts with ITGA5:ITGB1. Probably interacts (via endocytic sorting signal motif) with AP2M1; the interaction is inhibited by phosphorylation of Tyr-781. Interacts (via PDZ-binding motif) with NHERF1 (via PDZ domains); the interaction may enhance ACE2 membrane residence. (Microbial infection) Interacts with SARS-CoV S protein. The cofactor is Zn(2+). Requires chloride as cofactor. Proteolytic cleavage by ADAM17 generates a secreted form. Also cleaved by serine proteases: TMPRSS2, TMPRSS11D and HPN/TMPRSS1. Post-translationally, phosphorylated. Phosphorylation at Tyr-781 probably inhibits interaction with AP2M1 and enables interactions with proteins containing SH2 domains.

Its subcellular location is the secreted. The protein localises to the cell membrane. The protein resides in the cytoplasm. It is found in the cell projection. It localises to the cilium. Its subcellular location is the apical cell membrane. It catalyses the reaction angiotensin II + H2O = angiotensin-(1-7) + L-phenylalanine. It carries out the reaction angiotensin I + H2O = angiotensin-(1-9) + L-leucine. Its function is as follows. Essential counter-regulatory carboxypeptidase of the renin-angiotensin hormone system that is a critical regulator of blood volume, systemic vascular resistance, and thus cardiovascular homeostasis. Converts angiotensin I to angiotensin 1-9, a nine-amino acid peptide with anti-hypertrophic effects in cardiomyocytes, and angiotensin II to angiotensin 1-7, which then acts as a beneficial vasodilator and anti-proliferation agent, counterbalancing the actions of the vasoconstrictor angiotensin II. Also removes the C-terminal residue from three other vasoactive peptides, neurotensin, kinetensin, and des-Arg bradykinin, but is not active on bradykinin. Also cleaves other biological peptides, such as apelins, casomorphins and dynorphin A. Plays an important role in amino acid transport by acting as binding partner of amino acid transporter SLC6A19 in intestine, regulating trafficking, expression on the cell surface, and its catalytic activity. In terms of biological role, (Microbial infection) Acts as a receptor for human coronavirus SARS. This chain is Angiotensin-converting enzyme 2 (ACE2), found in Paguma larvata (Masked palm civet).